Reading from the N-terminus, the 555-residue chain is Transmembrane protein 87A (555 aa).

A signal peptide spans 1–21 (MAVAAWLQVSPVIFLLLGAQP). Over 22-225 (FPLSFLGAGP…YEYLTLEDYP (204 aa)) the chain is Lumenal. 2 disulfide bridges follow: C74–C128 and C89–C431. Residues N79, N157, and N160 are each glycosylated (N-linked (GlcNAc...) asparagine). The chain crosses the membrane as a helical span at residues 226 to 246 (LMIFFMVMCIVYVLFGVLWLA). Topologically, residues 247-257 (WSACYWRDLLR) are cytoplasmic. A helical transmembrane segment spans residues 258-278 (IQFWIGAVIFLGMFEKAVFYA). Topologically, residues 279–305 (EFQNIRYKGESVQNALVLAELLSAVKR) are lumenal. The helical transmembrane segment at 306–322 (SLARTLVIIVSLGYGIV) threads the bilayer. The Cytoplasmic portion of the chain corresponds to 323–325 (KPR). The chain crosses the membrane as a helical span at residues 326–346 (LGVTLHKVVVAGALYLLFSGM). Residues 347-361 (EGVLRVTGAQTDLAS) are Lumenal-facing. Residues 362-382 (LAFIPLAFLDTALCWWIFISL) form a helical membrane-spanning segment. Residues 383 to 403 (TQTMKLLKLRRNIVKLSLYRH) lie on the Cytoplasmic side of the membrane. Residues 404–424 (FTNTLILAVAASIVFIIWTTM) form a helical membrane-spanning segment. Over 425–437 (KFRIVTCQSDWRE) the chain is Lumenal. Residues 438–458 (LWVDDAIWRLLFSMILFVIMI) traverse the membrane as a helical segment. Topologically, residues 459–555 (LWRPSANNQR…ITHFERSKME (97 aa)) are cytoplasmic. A disordered region spans residues 491–515 (SFEGMKMRSTKQEPNGTSKVNKAQE). Positions 502–511 (QEPNGTSKVN) are enriched in polar residues. A Phosphoserine modification is found at S540.

Belongs to the LU7TM family. TMEM87 subfamily. In terms of assembly, may interact with STOML3; STOML3 potentiates the mechanosensitive ion channel activity associated with TMEM87A. In terms of tissue distribution, highly expressed in sensory neurons responsive to mechanical force.

Its subcellular location is the cell membrane. It localises to the golgi apparatus membrane. It is found in the cell projection. The protein resides in the ruffle. Potential monoatomic ion channel gated by mechanical force, implicated in normal touch sensitivity through the generation of mechanically activated currents. However, a direct channel activity is debated and an alternative could be that it functions as a chaperone for an unidentified mechanosensitive ion channel. Could also be involved in cell mechanosensitivity regulating cell adhesion and migration. May also be involved in retrograde transport from endosomes to the trans-Golgi network (TGN). This is Transmembrane protein 87A from Mus musculus (Mouse).